Reading from the N-terminus, the 296-residue chain is MKAGFIAVVGRPNVGKSTLINKLVSEKVAIVSDKAGTTRDNIKGILNFKDNQYIFIDTPGIHKPQHLLGEYMTNIAVKILKDVDIILFLIDASKPIGTGDMFVMDRINENSKKPRILLVNKVDLISDEQKEEKIKEIEEKLGKFDKIIFASGMYSFGISQLLEALDPYLEDGVKYYPDDMYTDMSTYRIITEIVREKILLKTRDEIPHSVAIEIINVERKEGKKDKFDINIYVERDSQKGIIIGKDGKMLKEIGVEARKEIEELLGEKIYLGLWVKVKDDWRKKKPFLKELGYVEE.

An Era-type G domain is found at 2–171 (KAGFIAVVGR…LEALDPYLED (170 aa)). The interval 10–17 (GRPNVGKS) is G1. A GTP-binding site is contributed by 10–17 (GRPNVGKS). A G2 region spans residues 36–40 (GTTRD). Residues 57–60 (DTPG) form a G3 region. GTP is bound by residues 57 to 61 (DTPGI) and 120 to 123 (NKVD). The segment at 120–123 (NKVD) is G4. Positions 150 to 152 (ASG) are G5. Positions 202–279 (TRDEIPHSVA…YLGLWVKVKD (78 aa)) constitute a KH type-2 domain.

Belongs to the TRAFAC class TrmE-Era-EngA-EngB-Septin-like GTPase superfamily. Era GTPase family. As to quaternary structure, monomer.

It localises to the cytoplasm. Its subcellular location is the cell inner membrane. Its function is as follows. An essential GTPase that binds both GDP and GTP, with rapid nucleotide exchange. Plays a role in 16S rRNA processing and 30S ribosomal subunit biogenesis and possibly also in cell cycle regulation and energy metabolism. The chain is GTPase Era from Fusobacterium nucleatum subsp. nucleatum (strain ATCC 25586 / DSM 15643 / BCRC 10681 / CIP 101130 / JCM 8532 / KCTC 2640 / LMG 13131 / VPI 4355).